A 375-amino-acid polypeptide reads, in one-letter code: Putative monooxygenase Rv1533 (375 aa).

FMN is bound by residues Gln190, Gly195, Gly224, and 243–246 (WCGS).

Belongs to the nitronate monooxygenase family. FMN serves as cofactor.

The polypeptide is Putative monooxygenase Rv1533 (Mycobacterium tuberculosis (strain ATCC 25618 / H37Rv)).